A 728-amino-acid polypeptide reads, in one-letter code: Polyribonucleotide nucleotidyltransferase (728 aa).

Positions 503 and 509 each coordinate Mg(2+). Residues 570 to 629 (PRLTTIKIPSDCIGMVIGKGGETIRGITEETGAEINIADDGTVTIACTTKEGTDAALATI) form the KH domain. Residues 639 to 713 (GNIYVGKVRD…GKTKFALSIK (75 aa)) enclose the S1 motif domain.

It belongs to the polyribonucleotide nucleotidyltransferase family. Mg(2+) is required as a cofactor.

The protein resides in the cytoplasm. It catalyses the reaction RNA(n+1) + phosphate = RNA(n) + a ribonucleoside 5'-diphosphate. Its function is as follows. Involved in mRNA degradation. Catalyzes the phosphorolysis of single-stranded polyribonucleotides processively in the 3'- to 5'-direction. This Chlorobium chlorochromatii (strain CaD3) protein is Polyribonucleotide nucleotidyltransferase.